Reading from the N-terminus, the 194-residue chain is Peptidyl-tRNA hydrolase (194 aa).

Tyr17 contacts tRNA. The active-site Proton acceptor is His22. Phe68, Asn70, and Asn116 together coordinate tRNA.

It belongs to the PTH family. As to quaternary structure, monomer.

The protein resides in the cytoplasm. The catalysed reaction is an N-acyl-L-alpha-aminoacyl-tRNA + H2O = an N-acyl-L-amino acid + a tRNA + H(+). Hydrolyzes ribosome-free peptidyl-tRNAs (with 1 or more amino acids incorporated), which drop off the ribosome during protein synthesis, or as a result of ribosome stalling. Its function is as follows. Catalyzes the release of premature peptidyl moieties from peptidyl-tRNA molecules trapped in stalled 50S ribosomal subunits, and thus maintains levels of free tRNAs and 50S ribosomes. In Actinobacillus succinogenes (strain ATCC 55618 / DSM 22257 / CCUG 43843 / 130Z), this protein is Peptidyl-tRNA hydrolase.